A 245-amino-acid chain; its full sequence is Uridylate kinase (245 aa).

Position 12 to 15 (12 to 15 (KISG)) interacts with ATP. Position 55 (Gly55) interacts with UMP. Residues Gly56 and Arg60 each coordinate ATP. Residues Asp76 and 137 to 144 (AGAPYLTT) contribute to the UMP site. ATP contacts are provided by Thr164, Tyr171, and Asp174.

Belongs to the UMP kinase family. Homohexamer.

The protein resides in the cytoplasm. The enzyme catalyses UMP + ATP = UDP + ADP. It functions in the pathway pyrimidine metabolism; CTP biosynthesis via de novo pathway; UDP from UMP (UMPK route): step 1/1. Inhibited by UTP. Functionally, catalyzes the reversible phosphorylation of UMP to UDP. This Chlamydia trachomatis serovar A (strain ATCC VR-571B / DSM 19440 / HAR-13) protein is Uridylate kinase.